Reading from the N-terminus, the 214-residue chain is YINYKNMSHQHMLTLFNLLPVGSNISIWWNFGSMLLACLMIQTITGFFLAIHYTANIDLAFSSIVHISRDVPCGWIMQNTXAIGASMFFICIYIHIARGIYYGSYLNKEVWLSGTTLLITLMATAFFGYVLPWGQMSFWAATVITNLLTAIPYLGTTLTTWLWGGFAINDPTLTRFFALHFILPFIIISLSSAHILLLHNEGSNNPLGTNSDID.

4 helical membrane passes run 31–51 (FGSM…FLAI), 75–96 (WIMQ…YIHI), 111–131 (WLSG…GYVL), and 176–196 (FFAL…AHIL). Positions 81 and 95 each coordinate heme b. Heme b-binding residues include histidine 180 and histidine 194. Histidine 199 serves as a coordination point for a ubiquinone.

Belongs to the cytochrome b family. In terms of assembly, the cytochrome bc1 complex contains 3 respiratory subunits (MT-CYB, CYC1 and UQCRFS1), 2 core proteins (UQCRC1 and UQCRC2) and probably 6 low-molecular weight proteins. Heme b serves as cofactor.

The protein localises to the mitochondrion inner membrane. Functionally, component of the ubiquinol-cytochrome c reductase complex (complex III or cytochrome b-c1 complex) that is part of the mitochondrial respiratory chain. The b-c1 complex mediates electron transfer from ubiquinol to cytochrome c. Contributes to the generation of a proton gradient across the mitochondrial membrane that is then used for ATP synthesis. This is Cytochrome b (MT-CYB) from Bothriechis schlegelii (Eyelash palm pitviper).